A 198-amino-acid chain; its full sequence is Large ribosomal subunit protein bL25 (198 aa).

The protein belongs to the bacterial ribosomal protein bL25 family. CTC subfamily. In terms of assembly, part of the 50S ribosomal subunit; part of the 5S rRNA/L5/L18/L25 subcomplex. Contacts the 5S rRNA. Binds to the 5S rRNA independently of L5 and L18.

Its function is as follows. This is one of the proteins that binds to the 5S RNA in the ribosome where it forms part of the central protuberance. The chain is Large ribosomal subunit protein bL25 from Bordetella avium (strain 197N).